Here is a 210-residue protein sequence, read N- to C-terminus: Urease accessory protein UreG (210 aa).

A GTP-binding site is contributed by 14 to 21 (GPVGSGKT).

Belongs to the SIMIBI class G3E GTPase family. UreG subfamily. Homodimer. UreD, UreF and UreG form a complex that acts as a GTP-hydrolysis-dependent molecular chaperone, activating the urease apoprotein by helping to assemble the nickel containing metallocenter of UreC. The UreE protein probably delivers the nickel.

It localises to the cytoplasm. Functionally, facilitates the functional incorporation of the urease nickel metallocenter. This process requires GTP hydrolysis, probably effectuated by UreG. This chain is Urease accessory protein UreG, found in Rhodopseudomonas palustris (strain BisA53).